Here is a 529-residue protein sequence, read N- to C-terminus: Bifunctional purine biosynthesis protein PurH (529 aa).

The MGS-like domain maps to 1-148 (MQQRRPVRRA…KNHKDVAIVV (148 aa)). The residue at position 287 (Lys-287) is an N6-acetyllysine.

Belongs to the PurH family.

It catalyses the reaction (6R)-10-formyltetrahydrofolate + 5-amino-1-(5-phospho-beta-D-ribosyl)imidazole-4-carboxamide = 5-formamido-1-(5-phospho-D-ribosyl)imidazole-4-carboxamide + (6S)-5,6,7,8-tetrahydrofolate. The catalysed reaction is IMP + H2O = 5-formamido-1-(5-phospho-D-ribosyl)imidazole-4-carboxamide. Its pathway is purine metabolism; IMP biosynthesis via de novo pathway; 5-formamido-1-(5-phospho-D-ribosyl)imidazole-4-carboxamide from 5-amino-1-(5-phospho-D-ribosyl)imidazole-4-carboxamide (10-formyl THF route): step 1/1. The protein operates within purine metabolism; IMP biosynthesis via de novo pathway; IMP from 5-formamido-1-(5-phospho-D-ribosyl)imidazole-4-carboxamide: step 1/1. The polypeptide is Bifunctional purine biosynthesis protein PurH (Escherichia coli O6:H1 (strain CFT073 / ATCC 700928 / UPEC)).